Reading from the N-terminus, the 411-residue chain is Adenylosuccinate synthetase (411 aa).

Residues 11–17 (GDEGKGK) and 39–41 (GHT) contribute to the GTP site. The active-site Proton acceptor is the aspartate 12. Mg(2+) is bound by residues aspartate 12 and glycine 39. IMP contacts are provided by residues 12–15 (DEGK), 37–40 (NAGH), threonine 121, arginine 135, glutamine 215, threonine 230, and arginine 294. Residue histidine 40 is the Proton donor of the active site. 290–296 (TTTKRPR) is a substrate binding site. Residues arginine 296, 322–324 (KLD), and 400–402 (STS) each bind GTP.

This sequence belongs to the adenylosuccinate synthetase family. Homodimer. The cofactor is Mg(2+).

Its subcellular location is the cytoplasm. It carries out the reaction IMP + L-aspartate + GTP = N(6)-(1,2-dicarboxyethyl)-AMP + GDP + phosphate + 2 H(+). It participates in purine metabolism; AMP biosynthesis via de novo pathway; AMP from IMP: step 1/2. Functionally, plays an important role in the de novo pathway of purine nucleotide biosynthesis. Catalyzes the first committed step in the biosynthesis of AMP from IMP. The sequence is that of Adenylosuccinate synthetase from Helicobacter pylori (strain J99 / ATCC 700824) (Campylobacter pylori J99).